A 407-amino-acid polypeptide reads, in one-letter code: Transmembrane protein 184B (407 aa).

Residues methionine 1–isoleucine 24 are disordered. Helical transmembrane passes span phenylalanine 40–isoleucine 60, isoleucine 84–asparagine 104, leucine 121–methionine 141, leucine 178–glycine 198, valine 214–phenylalanine 234, phenylalanine 249–leucine 269, and valine 290–leucine 310. The tract at residues threonine 369–asparagine 395 is disordered. Phosphoserine is present on residues serine 388, serine 402, and serine 403.

Belongs to the TMEM184 family.

The protein localises to the membrane. Its function is as follows. May activate the MAP kinase signaling pathway. The protein is Transmembrane protein 184B (TMEM184B) of Bos taurus (Bovine).